The following is a 122-amino-acid chain: Large ribosomal subunit protein uL14 (122 aa).

It belongs to the universal ribosomal protein uL14 family. In terms of assembly, part of the 50S ribosomal subunit. Forms a cluster with proteins L3 and L19. In the 70S ribosome, L14 and L19 interact and together make contacts with the 16S rRNA in bridges B5 and B8.

Binds to 23S rRNA. Forms part of two intersubunit bridges in the 70S ribosome. In Methylorubrum populi (strain ATCC BAA-705 / NCIMB 13946 / BJ001) (Methylobacterium populi), this protein is Large ribosomal subunit protein uL14.